The primary structure comprises 224 residues: Large ribosomal subunit protein uL3 (224 aa).

Glutamine 158 carries the post-translational modification N5-methylglutamine.

The protein belongs to the universal ribosomal protein uL3 family. Part of the 50S ribosomal subunit. Forms a cluster with proteins L14 and L19. Post-translationally, methylated by PrmB.

One of the primary rRNA binding proteins, it binds directly near the 3'-end of the 23S rRNA, where it nucleates assembly of the 50S subunit. The polypeptide is Large ribosomal subunit protein uL3 (Acidovorax sp. (strain JS42)).